Reading from the N-terminus, the 207-residue chain is Large ribosomal subunit protein uL4 (207 aa).

Residues 52–76 form a disordered region; the sequence is KNTSLVSGGGKKPWKQKGTGRARQG.

Belongs to the universal ribosomal protein uL4 family. Part of the 50S ribosomal subunit.

In terms of biological role, one of the primary rRNA binding proteins, this protein initially binds near the 5'-end of the 23S rRNA. It is important during the early stages of 50S assembly. It makes multiple contacts with different domains of the 23S rRNA in the assembled 50S subunit and ribosome. Forms part of the polypeptide exit tunnel. In Myxococcus xanthus (strain DK1622), this protein is Large ribosomal subunit protein uL4.